The following is a 264-amino-acid chain: 3-methyl-2-oxobutanoate hydroxymethyltransferase (264 aa).

Mg(2+) is bound by residues aspartate 45 and aspartate 84. 3-methyl-2-oxobutanoate-binding positions include 45–46 (DS), aspartate 84, and lysine 112. Glutamate 114 lines the Mg(2+) pocket. The active-site Proton acceptor is the glutamate 181.

Belongs to the PanB family. Homodecamer; pentamer of dimers. Mg(2+) is required as a cofactor.

Its subcellular location is the cytoplasm. The enzyme catalyses 3-methyl-2-oxobutanoate + (6R)-5,10-methylene-5,6,7,8-tetrahydrofolate + H2O = 2-dehydropantoate + (6S)-5,6,7,8-tetrahydrofolate. The protein operates within cofactor biosynthesis; (R)-pantothenate biosynthesis; (R)-pantoate from 3-methyl-2-oxobutanoate: step 1/2. Catalyzes the reversible reaction in which hydroxymethyl group from 5,10-methylenetetrahydrofolate is transferred onto alpha-ketoisovalerate to form ketopantoate. This Aeromonas salmonicida (strain A449) protein is 3-methyl-2-oxobutanoate hydroxymethyltransferase.